The chain runs to 129 residues: Small ribosomal subunit protein uS11 (129 aa).

Belongs to the universal ribosomal protein uS11 family. Part of the 30S ribosomal subunit. Interacts with proteins S7 and S18. Binds to IF-3.

In terms of biological role, located on the platform of the 30S subunit, it bridges several disparate RNA helices of the 16S rRNA. Forms part of the Shine-Dalgarno cleft in the 70S ribosome. This is Small ribosomal subunit protein uS11 from Francisella tularensis subsp. holarctica (strain FTNF002-00 / FTA).